The sequence spans 136 residues: uncharacterized protein (136 aa).

Positions 1–51 are disordered; it reads MAANATSGRPPSIALRQPEATGWRRGIPAKVATKGTQAEREGDVRSGGRAR. The segment covering 37 to 46 has biased composition (basic and acidic residues); it reads QAEREGDVRS.

This is an uncharacterized protein from Homo sapiens (Human).